The sequence spans 212 residues: Glycerol-3-phosphate acyltransferase (212 aa).

Helical transmembrane passes span Ile-3–Ser-23, Asp-78–Phe-98, Ala-115–Phe-135, and Phe-155–Trp-177.

This sequence belongs to the PlsY family. Probably interacts with PlsX.

The protein localises to the cell inner membrane. It catalyses the reaction an acyl phosphate + sn-glycerol 3-phosphate = a 1-acyl-sn-glycero-3-phosphate + phosphate. It functions in the pathway lipid metabolism; phospholipid metabolism. In terms of biological role, catalyzes the transfer of an acyl group from acyl-phosphate (acyl-PO(4)) to glycerol-3-phosphate (G3P) to form lysophosphatidic acid (LPA). This enzyme utilizes acyl-phosphate as fatty acyl donor, but not acyl-CoA or acyl-ACP. The polypeptide is Glycerol-3-phosphate acyltransferase (Burkholderia lata (strain ATCC 17760 / DSM 23089 / LMG 22485 / NCIMB 9086 / R18194 / 383)).